The chain runs to 736 residues: Elongation factor 2 (736 aa).

Positions 18–234 (TRVRNIGIIA…VIDAYTASDK (217 aa)) constitute a tr-type G domain. GTP contacts are provided by residues 27–34 (AHVDHGKT), 93–97 (DTPGH), and 147–150 (NKVD). The residue at position 603 (H603) is a Diphthamide.

Belongs to the TRAFAC class translation factor GTPase superfamily. Classic translation factor GTPase family. EF-G/EF-2 subfamily.

It is found in the cytoplasm. Catalyzes the GTP-dependent ribosomal translocation step during translation elongation. During this step, the ribosome changes from the pre-translocational (PRE) to the post-translocational (POST) state as the newly formed A-site-bound peptidyl-tRNA and P-site-bound deacylated tRNA move to the P and E sites, respectively. Catalyzes the coordinated movement of the two tRNA molecules, the mRNA and conformational changes in the ribosome. In Saccharolobus solfataricus (strain ATCC 35092 / DSM 1617 / JCM 11322 / P2) (Sulfolobus solfataricus), this protein is Elongation factor 2 (fusA).